A 565-amino-acid polypeptide reads, in one-letter code: Periplasmic trehalase (565 aa).

Residues 1–30 form the signal peptide; the sequence is MKSPAPSRPQKMALIPACIFLCFAALSVQA. Substrate-binding positions include R152, 159-160, N196, 205-207, 277-279, and G310; these read WD, RSQ, and RPE. Residues D312 and E496 each act as proton donor/acceptor in the active site. Residue E511 coordinates substrate. The tract at residues 539 to 565 is disordered; that stretch reads CDNVPATRPLSESTTQPVKQKEAEPTP.

It belongs to the glycosyl hydrolase 37 family. As to quaternary structure, monomer.

It is found in the periplasm. The enzyme catalyses alpha,alpha-trehalose + H2O = alpha-D-glucose + beta-D-glucose. Its function is as follows. Provides the cells with the ability to utilize trehalose at high osmolarity by splitting it into glucose molecules that can subsequently be taken up by the phosphotransferase-mediated uptake system. The sequence is that of Periplasmic trehalase from Escherichia coli O17:K52:H18 (strain UMN026 / ExPEC).